Consider the following 117-residue polypeptide: Large ribosomal subunit protein uL18 (117 aa).

This sequence belongs to the universal ribosomal protein uL18 family. In terms of assembly, part of the 50S ribosomal subunit; part of the 5S rRNA/L5/L18/L25 subcomplex. Contacts the 5S and 23S rRNAs.

This is one of the proteins that bind and probably mediate the attachment of the 5S RNA into the large ribosomal subunit, where it forms part of the central protuberance. The sequence is that of Large ribosomal subunit protein uL18 from Yersinia pseudotuberculosis serotype O:1b (strain IP 31758).